The primary structure comprises 485 residues: Cysteine--tRNA ligase (485 aa).

C27 contributes to the Zn(2+) binding site. The short motif at 29-39 (ITAYDFSHIGH) is the 'HIGH' region element. 3 residues coordinate Zn(2+): C208, H233, and E237. The short motif at 265–269 (KMSKS) is the 'KMSKS' region element. K268 is an ATP binding site.

It belongs to the class-I aminoacyl-tRNA synthetase family. In terms of assembly, monomer. Zn(2+) serves as cofactor.

The protein localises to the cytoplasm. It carries out the reaction tRNA(Cys) + L-cysteine + ATP = L-cysteinyl-tRNA(Cys) + AMP + diphosphate. The chain is Cysteine--tRNA ligase from Lawsonia intracellularis (strain PHE/MN1-00).